The chain runs to 327 residues: MQKVFIALTDHKRLDEFLAKELQISKNQVLNLIKEGLVFCQKKEVKKGGLALKEGDEITLLTPKITPKPLKKELDLEIEVIFEDEDLLVLNKPPNLVVHKALSVKEPTLVDWLEFKNYELSNLGLKERYGIVHRLDKDTSGGIVIAKNNFTHVHLSEQLKTKMMGRYYIALLSTPLKEEKMSVECYLTRNPNNRLKMIALKAVKKEKSRYSKSEFISLLTSQNNLNLIGAKLFTGRTHQIRAHLEYLNRHIIGDNLYGLNGALPKEEIRIMLHAYLIEFKHPRSEQKLRFKVPLLKDMLEYLKKVFDKENLDEVLDEEKILHAFIAK.

The S4 RNA-binding domain maps to Lys12–Glu79. Asp136 is a catalytic residue.

This sequence belongs to the pseudouridine synthase RluA family.

The enzyme catalyses a uridine in RNA = a pseudouridine in RNA. This is an uncharacterized protein from Helicobacter pylori (strain ATCC 700392 / 26695) (Campylobacter pylori).